The primary structure comprises 129 residues: Large ribosomal subunit protein bL17 (129 aa).

The protein belongs to the bacterial ribosomal protein bL17 family. In terms of assembly, part of the 50S ribosomal subunit. Contacts protein L32.

The protein is Large ribosomal subunit protein bL17 of Pseudomonas aeruginosa (strain UCBPP-PA14).